The following is a 147-amino-acid chain: Large ribosomal subunit protein uL13 (147 aa).

Belongs to the universal ribosomal protein uL13 family. As to quaternary structure, part of the 50S ribosomal subunit.

This protein is one of the early assembly proteins of the 50S ribosomal subunit, although it is not seen to bind rRNA by itself. It is important during the early stages of 50S assembly. The sequence is that of Large ribosomal subunit protein uL13 from Mycobacterium marinum (strain ATCC BAA-535 / M).